The chain runs to 211 residues: Uridine kinase (211 aa).

An ATP-binding site is contributed by 12-19 (GGSGGGKT).

This sequence belongs to the uridine kinase family.

The protein localises to the cytoplasm. It carries out the reaction uridine + ATP = UMP + ADP + H(+). The catalysed reaction is cytidine + ATP = CMP + ADP + H(+). It participates in pyrimidine metabolism; CTP biosynthesis via salvage pathway; CTP from cytidine: step 1/3. The protein operates within pyrimidine metabolism; UMP biosynthesis via salvage pathway; UMP from uridine: step 1/1. The polypeptide is Uridine kinase (Streptococcus thermophilus (strain CNRZ 1066)).